The primary structure comprises 367 residues: Putative F-box/kelch-repeat protein At4g39600 (367 aa).

An F-box domain is found at 11 to 57 (ATSNPSLPEDLVVSCLARVSRLYYPTLSLVSKSFRSLIASPDLYKTR). Kelch repeat units lie at residues 127-171 (HLYA…LDGK) and 172-216 (MYLA…EGKI).

The protein is Putative F-box/kelch-repeat protein At4g39600 of Arabidopsis thaliana (Mouse-ear cress).